A 359-amino-acid chain; its full sequence is 3-dehydroquinate synthase (359 aa).

NAD(+)-binding positions include 71–76 (DGEAYK), 105–109 (GVVGD), 129–130 (TT), Lys-142, and Lys-151. Zn(2+)-binding residues include Glu-184, His-247, and His-264.

Belongs to the sugar phosphate cyclases superfamily. Dehydroquinate synthase family. Co(2+) serves as cofactor. The cofactor is Zn(2+). NAD(+) is required as a cofactor.

The protein localises to the cytoplasm. The catalysed reaction is 7-phospho-2-dehydro-3-deoxy-D-arabino-heptonate = 3-dehydroquinate + phosphate. It participates in metabolic intermediate biosynthesis; chorismate biosynthesis; chorismate from D-erythrose 4-phosphate and phosphoenolpyruvate: step 2/7. In terms of biological role, catalyzes the conversion of 3-deoxy-D-arabino-heptulosonate 7-phosphate (DAHP) to dehydroquinate (DHQ). This chain is 3-dehydroquinate synthase, found in Burkholderia orbicola (strain MC0-3).